A 185-amino-acid chain; its full sequence is Ribosome-recycling factor (185 aa).

Belongs to the RRF family.

The protein localises to the cytoplasm. Responsible for the release of ribosomes from messenger RNA at the termination of protein biosynthesis. May increase the efficiency of translation by recycling ribosomes from one round of translation to another. The polypeptide is Ribosome-recycling factor (Pseudomonas putida (strain GB-1)).